We begin with the raw amino-acid sequence, 1219 residues long: Regulator of telomere elongation helicase 1 (1219 aa).

In terms of domain architecture, Helicase ATP-binding spans 7–296 (NGVTVDFPFQ…TKAAQQGEPH (290 aa)). 42–49 (SPTGTGKT) contributes to the ATP binding site. 4 residues coordinate [4Fe-4S] cluster: Cys-145, Cys-163, Cys-172, and Cys-207. Residues 151-167 (KKQESNHLQIHLCRKKV) carry the Nuclear localization signal motif. The DEAH box motif lies at 250 to 253 (DEAH). Disordered regions lie at residues 287-306 (TKAA…SPSP), 757-786 (PAPA…FFST), 839-877 (EHSE…GRKK), 979-1005 (RPEH…PDPK), 1017-1054 (DPQE…RAGK), 1132-1151 (CTDL…PQEE), and 1159-1219 (LTHR…EWGL). The span at 757-766 (PAPAPRATAP) shows a compositional bias: low complexity. Residues 863–873 (SEKRPAEEPRG) are compositionally biased toward basic and acidic residues. The Nuclear localization signal signature appears at 871–877 (PRGGRKK). Residues 1176 to 1185 (KTQSKISSFL) show a composition bias toward polar residues. The PIP-box motif lies at 1178-1185 (QSKISSFL). Residues 1200–1219 (AGPSQSSGPPHGPAASEWGL) show a composition bias toward low complexity.

The protein belongs to the helicase family. RAD3/XPD subfamily. As to quaternary structure, interacts with TERF1. Interacts (via PIP-box) with PCNA; the interaction is direct and essential for suppressing telomere fragility. Interacts with MMS19; the interaction mediates the association of RTEL1 with the cytosolic iron-sulfur protein assembly (CIA) complex.

It is found in the nucleus. It carries out the reaction ATP + H2O = ADP + phosphate + H(+). A probable ATP-dependent DNA helicase implicated in telomere-length regulation, DNA repair and the maintenance of genomic stability. Acts as an anti-recombinase to counteract toxic recombination and limit crossover during meiosis. Regulates meiotic recombination and crossover homeostasis by physically dissociating strand invasion events and thereby promotes noncrossover repair by meiotic synthesis dependent strand annealing (SDSA) as well as disassembly of D loop recombination intermediates. Also disassembles T loops and prevents telomere fragility by counteracting telomeric G4-DNA structures, which together ensure the dynamics and stability of the telomere. This Homo sapiens (Human) protein is Regulator of telomere elongation helicase 1.